Consider the following 486-residue polypeptide: Cysteine--tRNA ligase (486 aa).

C29 contributes to the Zn(2+) binding site. The short motif at 31–41 (VTVYDYCHLGH) is the 'HIGH' region element. The Zn(2+) site is built by C214, H239, and E243. The short motif at 271 to 275 (KMSKS) is the 'KMSKS' region element. Residue K274 coordinates ATP.

This sequence belongs to the class-I aminoacyl-tRNA synthetase family. As to quaternary structure, monomer. Zn(2+) serves as cofactor.

Its subcellular location is the cytoplasm. It catalyses the reaction tRNA(Cys) + L-cysteine + ATP = L-cysteinyl-tRNA(Cys) + AMP + diphosphate. The chain is Cysteine--tRNA ligase from Nostoc sp. (strain PCC 7120 / SAG 25.82 / UTEX 2576).